Consider the following 105-residue polypeptide: Ferredoxin (105 aa).

2 residues coordinate [3Fe-4S] cluster: Cys8 and Cys16. [4Fe-4S] cluster-binding residues include Cys20, Cys39, Cys42, and Cys45. Positions 30–59 (RSLYIHPDECVDCGACEPVCPVEAIFYEDD) constitute a 4Fe-4S ferredoxin-type domain. Position 49 (Cys49) interacts with [3Fe-4S] cluster.

Requires [4Fe-4S] cluster as cofactor. [3Fe-4S] cluster is required as a cofactor.

Ferredoxins are iron-sulfur proteins that transfer electrons in a wide variety of metabolic reactions. Its function is as follows. Putative electron transport protein for the cytochrome P-450SOY system from the same organism. This chain is Ferredoxin, found in Streptomyces griseus.